The following is a 277-amino-acid chain: 2-dehydro-3-deoxyphosphooctonate aldolase (277 aa).

The protein belongs to the KdsA family.

It localises to the cytoplasm. It catalyses the reaction D-arabinose 5-phosphate + phosphoenolpyruvate + H2O = 3-deoxy-alpha-D-manno-2-octulosonate-8-phosphate + phosphate. Its pathway is carbohydrate biosynthesis; 3-deoxy-D-manno-octulosonate biosynthesis; 3-deoxy-D-manno-octulosonate from D-ribulose 5-phosphate: step 2/3. It functions in the pathway bacterial outer membrane biogenesis; lipopolysaccharide biosynthesis. The chain is 2-dehydro-3-deoxyphosphooctonate aldolase from Brucella canis (strain ATCC 23365 / NCTC 10854 / RM-666).